The primary structure comprises 124 residues: Small ribosomal subunit protein uS12 (124 aa).

A 3-methylthioaspartic acid modification is found at Asp89.

It belongs to the universal ribosomal protein uS12 family. In terms of assembly, part of the 30S ribosomal subunit. Contacts proteins S8 and S17. May interact with IF1 in the 30S initiation complex.

Its function is as follows. With S4 and S5 plays an important role in translational accuracy. Interacts with and stabilizes bases of the 16S rRNA that are involved in tRNA selection in the A site and with the mRNA backbone. Located at the interface of the 30S and 50S subunits, it traverses the body of the 30S subunit contacting proteins on the other side and probably holding the rRNA structure together. The combined cluster of proteins S8, S12 and S17 appears to hold together the shoulder and platform of the 30S subunit. In Vibrio cholerae serotype O1 (strain ATCC 39315 / El Tor Inaba N16961), this protein is Small ribosomal subunit protein uS12.